Consider the following 113-residue polypeptide: MLLLLVPAFQVIFTLGGTRAQSVTQLDSQVPVFEEAPVELRCNYSSSVSVYLFWYVQYPNQGLQLLLKYLSGSTLVESINGFEAEFNKSQTSFHLRKPSVHISDTAEYFCAVS.

The N-terminal stretch at 1-20 (MLLLLVPAFQVIFTLGGTRA) is a signal peptide. The Ig-like domain occupies 21–113 (QSVTQLDSQV…DTAEYFCAVS (93 aa)). Cys42 and Cys110 are disulfide-bonded. N-linked (GlcNAc...) asparagine glycans are attached at residues Asn43 and Asn87.

Alpha-beta TR is a heterodimer composed of an alpha and beta chain; disulfide-linked. The alpha-beta TR is associated with the transmembrane signaling CD3 coreceptor proteins to form the TR-CD3 (TcR or TCR). The assembly of alpha-beta TR heterodimers with CD3 occurs in the endoplasmic reticulum where a single alpha-beta TR heterodimer associates with one CD3D-CD3E heterodimer, one CD3G-CD3E heterodimer and one CD247 homodimer forming a stable octameric structure. CD3D-CD3E and CD3G-CD3E heterodimers preferentially associate with TR alpha and TR beta chains, respectively. The association of the CD247 homodimer is the last step of TcR assembly in the endoplasmic reticulum and is required for transport to the cell surface.

Its subcellular location is the cell membrane. Functionally, v region of the variable domain of T cell receptor (TR) alpha chain that participates in the antigen recognition. Alpha-beta T cell receptors are antigen specific receptors which are essential to the immune response and are present on the cell surface of T lymphocytes. Recognize peptide-major histocompatibility (MH) (pMH) complexes that are displayed by antigen presenting cells (APC), a prerequisite for efficient T cell adaptive immunity against pathogens. Binding of alpha-beta TR to pMH complex initiates TR-CD3 clustering on the cell surface and intracellular activation of LCK that phosphorylates the ITAM motifs of CD3G, CD3D, CD3E and CD247 enabling the recruitment of ZAP70. In turn ZAP70 phosphorylates LAT, which recruits numerous signaling molecules to form the LAT signalosome. The LAT signalosome propagates signal branching to three major signaling pathways, the calcium, the mitogen-activated protein kinase (MAPK) kinase and the nuclear factor NF-kappa-B (NF-kB) pathways, leading to the mobilization of transcription factors that are critical for gene expression and essential for T cell growth and differentiation. The T cell repertoire is generated in the thymus, by V-(D)-J rearrangement. This repertoire is then shaped by intrathymic selection events to generate a peripheral T cell pool of self-MH restricted, non-autoaggressive T cells. Post-thymic interaction of alpha-beta TR with the pMH complexes shapes TR structural and functional avidity. The polypeptide is T cell receptor alpha variable 8-6 (Homo sapiens (Human)).